The following is a 181-amino-acid chain: Oligoribonuclease (181 aa).

In terms of domain architecture, Exonuclease spans 8–171 (LIWIDLEMTG…DDIRESVAEL (164 aa)). Y129 is a catalytic residue.

The protein belongs to the oligoribonuclease family.

It localises to the cytoplasm. Its function is as follows. 3'-to-5' exoribonuclease specific for small oligoribonucleotides. The chain is Oligoribonuclease from Salmonella choleraesuis (strain SC-B67).